Reading from the N-terminus, the 206-residue chain is 2,3-bisphosphoglycerate-dependent phosphoglycerate mutase (206 aa).

Substrate-binding positions include 9–16 (RHGQSEWN), 22–23 (TG), arginine 61, 88–91 (ERDY), lysine 99, 115–116 (RR), and 159–160 (GN). Histidine 10 acts as the Tele-phosphohistidine intermediate in catalysis. Glutamate 88 (proton donor/acceptor) is an active-site residue.

Belongs to the phosphoglycerate mutase family. BPG-dependent PGAM subfamily. As to quaternary structure, homodimer.

It carries out the reaction (2R)-2-phosphoglycerate = (2R)-3-phosphoglycerate. It functions in the pathway carbohydrate degradation; glycolysis; pyruvate from D-glyceraldehyde 3-phosphate: step 3/5. In terms of biological role, catalyzes the interconversion of 2-phosphoglycerate and 3-phosphoglycerate. In Chelativorans sp. (strain BNC1), this protein is 2,3-bisphosphoglycerate-dependent phosphoglycerate mutase.